We begin with the raw amino-acid sequence, 1280 residues long: E3 ubiquitin-protein ligase RKP (1280 aa).

Residues 82–269 (KLHGDLDVSV…CELNFGAYPF (188 aa)) form the B30.2/SPRY domain. Residues 551-571 (SVLVSLFSVILHFLSEGFAML) form a helical membrane-spanning segment. The segment at 669 to 719 (DRGKNTAQSSRGRCSSIPERSSHVAAECSAGSFSEEIDDKPSTSNQSDPDF) is disordered. The helical transmembrane segment at 834-854 (ALCMWVVQLLLVLSKMDSVFV) threads the bilayer. The RING-type zinc-finger motif lies at 1217–1252 (CCICYAGEANAMIAPCSHRSCYGCITRHLLNCQRCF).

It is found in the membrane. It carries out the reaction S-ubiquitinyl-[E2 ubiquitin-conjugating enzyme]-L-cysteine + [acceptor protein]-L-lysine = [E2 ubiquitin-conjugating enzyme]-L-cysteine + N(6)-ubiquitinyl-[acceptor protein]-L-lysine.. In terms of biological role, E3 ubiquitin-protein ligase that promotes the ubiquitination and proteasomal degradation of KRP1 and KRP2. The protein is E3 ubiquitin-protein ligase RKP (RKP) of Arabidopsis thaliana (Mouse-ear cress).